The following is a 664-amino-acid chain: Macoilin (664 aa).

The next 4 membrane-spanning stretches (helical) occupy residues 28–48 (TFLY…DFVL), 75–95 (AFSV…LLFI), 120–140 (VCLP…AIRF), and 154–174 (FAAH…KSYV). The segment covering 252-265 (YREKGKEKDKDAKK) has biased composition (basic and acidic residues). Residues 252 to 274 (YREKGKEKDKDAKKHNLGINNNN) are disordered. S305 carries the post-translational modification Phosphoserine. Residues 320–348 (KNYKNASGVVNSSPRSHSATNGSIPSSSS) show a composition bias toward polar residues. The disordered stretch occupies residues 320–375 (KNYKNASGVVNSSPRSHSATNGSIPSSSSKNEKKQRCTSKGPSAHKDLMENCIPNN). N-linked (GlcNAc...) asparagine glycosylation occurs at N324. S332 carries the post-translational modification Phosphoserine. N340 and N452 each carry an N-linked (GlcNAc...) asparagine glycan. A disordered region spans residues 630–664 (TSPLSPVSPHYSSKFVETSPSGLDPNASVYQPLKK). 2 positions are modified to phosphoserine: S631 and S634. N655 is a glycosylation site (N-linked (GlcNAc...) asparagine).

Belongs to the macoilin family.

Its subcellular location is the rough endoplasmic reticulum membrane. It is found in the nucleus membrane. Its function is as follows. Plays a role in the regulation of neuronal activity. This chain is Macoilin, found in Rattus norvegicus (Rat).